Here is a 1245-residue protein sequence, read N- to C-terminus: Trafficking protein particle complex II-specific subunit 130 homolog (1245 aa).

Disordered regions lie at residues 488-524 (GDGS…TSLP) and 884-903 (HVGG…TRKV). Low complexity-rich tracts occupy residues 495–507 (ANSK…SASN) and 888–898 (TDASKTSSSST).

The protein belongs to the TMEM1 family. In terms of assembly, part of the multisubunit TRAPP (transport protein particle) II complex composed of BET3, BET5, TRS20, TRS23, TRS31, TRS33, TRS65, TRS85, TRS120 and TRS130.

It localises to the golgi apparatus. Its subcellular location is the trans-Golgi network. The protein localises to the early endosome. Its function is as follows. Specific subunit of the TRAPP II complex, a highly conserved vesicle tethering complex that is required for the proper transport of proteins in post-Golgi trafficking pathways to the growing cell plate in mitotic active cells. The protein is Trafficking protein particle complex II-specific subunit 130 homolog of Oryza sativa subsp. japonica (Rice).